A 152-amino-acid chain; its full sequence is Superoxide dismutase [Cu-Zn] (152 aa).

At Ser-2 the chain carries N-acetylserine. Cu cation is bound by residues His-44, His-46, and His-61. Cysteines 55 and 144 form a disulfide. His-61, His-69, His-78, and Asp-81 together coordinate Zn(2+). His-118 serves as a coordination point for Cu cation.

Belongs to the Cu-Zn superoxide dismutase family. In terms of assembly, monomer. Requires Cu cation as cofactor. Zn(2+) is required as a cofactor.

Its subcellular location is the cytoplasm. The catalysed reaction is 2 superoxide + 2 H(+) = H2O2 + O2. With respect to regulation, inhibited by KCN and diethyldithiocarbamate. Its function is as follows. Destroys radicals which are normally produced within the cells and which are toxic to biological systems. The plasma superoxide dismutase has phagocytosis-stimulating activity and may play an important role in the biological defenses of the organism. This Halocynthia roretzi (Sea squirt) protein is Superoxide dismutase [Cu-Zn].